A 96-amino-acid polypeptide reads, in one-letter code: Aspartyl/glutamyl-tRNA(Asn/Gln) amidotransferase subunit C (96 aa).

Belongs to the GatC family. As to quaternary structure, heterotrimer of A, B and C subunits.

The enzyme catalyses L-glutamyl-tRNA(Gln) + L-glutamine + ATP + H2O = L-glutaminyl-tRNA(Gln) + L-glutamate + ADP + phosphate + H(+). The catalysed reaction is L-aspartyl-tRNA(Asn) + L-glutamine + ATP + H2O = L-asparaginyl-tRNA(Asn) + L-glutamate + ADP + phosphate + 2 H(+). Functionally, allows the formation of correctly charged Asn-tRNA(Asn) or Gln-tRNA(Gln) through the transamidation of misacylated Asp-tRNA(Asn) or Glu-tRNA(Gln) in organisms which lack either or both of asparaginyl-tRNA or glutaminyl-tRNA synthetases. The reaction takes place in the presence of glutamine and ATP through an activated phospho-Asp-tRNA(Asn) or phospho-Glu-tRNA(Gln). This chain is Aspartyl/glutamyl-tRNA(Asn/Gln) amidotransferase subunit C, found in Deinococcus deserti (strain DSM 17065 / CIP 109153 / LMG 22923 / VCD115).